The primary structure comprises 459 residues: Phosphomethylpyrimidine synthase (459 aa).

Substrate is bound by residues N80, M109, Y139, H175, 195–197 (SRG), 236–239 (DSLR), and E275. A Zn(2+)-binding site is contributed by H279. Y302 is a substrate binding site. H343 contributes to the Zn(2+) binding site. Residues C423, C426, and C431 each contribute to the [4Fe-4S] cluster site.

Belongs to the ThiC family. It depends on [4Fe-4S] cluster as a cofactor.

It carries out the reaction 5-amino-1-(5-phospho-beta-D-ribosyl)imidazole + S-adenosyl-L-methionine = 4-amino-2-methyl-5-(phosphooxymethyl)pyrimidine + CO + 5'-deoxyadenosine + formate + L-methionine + 3 H(+). Its pathway is cofactor biosynthesis; thiamine diphosphate biosynthesis. Functionally, catalyzes the synthesis of the hydroxymethylpyrimidine phosphate (HMP-P) moiety of thiamine from aminoimidazole ribotide (AIR) in a radical S-adenosyl-L-methionine (SAM)-dependent reaction. This is Phosphomethylpyrimidine synthase from Gloeothece citriformis (strain PCC 7424) (Cyanothece sp. (strain PCC 7424)).